Reading from the N-terminus, the 511-residue chain is Phosphoenolpyruvate carboxylase (511 aa).

It belongs to the PEPCase type 2 family. In terms of assembly, homotetramer. Mg(2+) serves as cofactor.

It catalyses the reaction oxaloacetate + phosphate = phosphoenolpyruvate + hydrogencarbonate. Its function is as follows. Catalyzes the irreversible beta-carboxylation of phosphoenolpyruvate (PEP) to form oxaloacetate (OAA), a four-carbon dicarboxylic acid source for the tricarboxylic acid cycle. This Saccharolobus islandicus (strain Y.G.57.14 / Yellowstone #1) (Sulfolobus islandicus) protein is Phosphoenolpyruvate carboxylase.